The following is a 423-amino-acid chain: Imidazolonepropionase (423 aa).

Fe(3+) is bound by residues His-78 and His-80. Zn(2+)-binding residues include His-78 and His-80. Residues Arg-87, Tyr-150, and His-183 each contribute to the 4-imidazolone-5-propanoate site. Residue Tyr-150 coordinates N-formimidoyl-L-glutamate. His-247 lines the Fe(3+) pocket. His-247 is a binding site for Zn(2+). 4-imidazolone-5-propanoate is bound at residue Glu-250. Asp-322 lines the Fe(3+) pocket. Asp-322 serves as a coordination point for Zn(2+). The N-formimidoyl-L-glutamate site is built by Asn-324 and Gly-326. A 4-imidazolone-5-propanoate-binding site is contributed by Ser-327.

This sequence belongs to the metallo-dependent hydrolases superfamily. HutI family. Zn(2+) serves as cofactor. The cofactor is Fe(3+).

It is found in the cytoplasm. It carries out the reaction 4-imidazolone-5-propanoate + H2O = N-formimidoyl-L-glutamate. It participates in amino-acid degradation; L-histidine degradation into L-glutamate; N-formimidoyl-L-glutamate from L-histidine: step 3/3. In terms of biological role, catalyzes the hydrolytic cleavage of the carbon-nitrogen bond in imidazolone-5-propanoate to yield N-formimidoyl-L-glutamate. It is the third step in the universal histidine degradation pathway. This chain is Imidazolonepropionase, found in Bacillus cereus (strain ZK / E33L).